Here is a 1962-residue protein sequence, read N- to C-terminus: PIII-type proteinase (1962 aa).

Positions 1-33 (MQRKKKGLSILLAGTVALGALAVLPVGEIQAKA) are cleaved as a signal peptide. Positions 34–187 (AISQQTKGSS…VTLAKVYYPT (154 aa)) are excised as a propeptide. A Peptidase S8 domain is found at 191-697 (ANSMANVQAV…AGLVDVKAAI (507 aa)). Catalysis depends on charge relay system residues Asp-217, His-281, and Ser-620. The tract at residues 1796 to 1938 (GKGDGTTGTS…KTGETTERPA (143 aa)) is disordered. A compositionally biased stretch (gly residues) spans 1797-1812 (KGDGTTGTSDKGGGQG). 2 stretches are compositionally biased toward polar residues: residues 1856–1865 (RNGQLTSGTS) and 1890–1903 (SQPS…TNPA). The LPXTG sorting signal motif lies at 1927–1931 (LPKTG). The residue at position 1930 (Thr-1930) is a Pentaglycyl murein peptidoglycan amidated threonine. Positions 1931–1962 (GETTERPAFGFLGVIVVSLMGVLGLKRKQREE) are cleaved as a propeptide — removed by sortase.

The protein belongs to the peptidase S8 family.

It localises to the secreted. Its subcellular location is the cell wall. It carries out the reaction Endopeptidase activity with very broad specificity, although some subsite preference have been noted, e.g. large hydrophobic residues in the P1 and P4 positions, and Pro in the P2 position. Best known for its action on caseins, although it has been shown to hydrolyze hemoglobin and oxidized insulin B-chain.. Functionally, protease which breaks down milk proteins during the growth of the bacteria on milk. The chain is PIII-type proteinase (prtP) from Lactococcus lactis subsp. cremoris (strain SK11).